The sequence spans 311 residues: Urease accessory protein UreD (311 aa).

This sequence belongs to the UreD family. UreD, UreF and UreG form a complex that acts as a GTP-hydrolysis-dependent molecular chaperone, activating the urease apoprotein by helping to assemble the nickel containing metallocenter of UreC. The UreE protein probably delivers the nickel.

It localises to the cytoplasm. In terms of biological role, required for maturation of urease via the functional incorporation of the urease nickel metallocenter. The protein is Urease accessory protein UreD of Parasynechococcus marenigrum (strain WH8102).